A 229-amino-acid chain; its full sequence is Ribonuclease HII (229 aa).

The 190-residue stretch at 34–223 folds into the RNase H type-2 domain; that stretch reads WPVAGADEAG…LRKSEDGPEM (190 aa). Residues D40, E41, and D131 each coordinate a divalent metal cation. A disordered region spans residues 209–229; sequence MSFRPLRKSEDGPEMDELIPE. A compositionally biased stretch (acidic residues) spans 220–229; that stretch reads GPEMDELIPE.

Belongs to the RNase HII family. It depends on Mn(2+) as a cofactor. The cofactor is Mg(2+).

It localises to the cytoplasm. It catalyses the reaction Endonucleolytic cleavage to 5'-phosphomonoester.. Its function is as follows. Endonuclease that specifically degrades the RNA of RNA-DNA hybrids. This is Ribonuclease HII from Rhizobium etli (strain CIAT 652).